The primary structure comprises 329 residues: Glycerol-3-phosphate dehydrogenase [NAD(P)+] (329 aa).

NADPH is bound by residues S10, W11, R31, and K105. Residues K105, G134, and S136 each contribute to the sn-glycerol 3-phosphate site. A138 is an NADPH binding site. Residues K189, D242, S252, R253, and N254 each contribute to the sn-glycerol 3-phosphate site. K189 acts as the Proton acceptor in catalysis. R253 is a binding site for NADPH. Residues V277 and E279 each coordinate NADPH.

It belongs to the NAD-dependent glycerol-3-phosphate dehydrogenase family.

It is found in the cytoplasm. The enzyme catalyses sn-glycerol 3-phosphate + NAD(+) = dihydroxyacetone phosphate + NADH + H(+). It carries out the reaction sn-glycerol 3-phosphate + NADP(+) = dihydroxyacetone phosphate + NADPH + H(+). It participates in membrane lipid metabolism; glycerophospholipid metabolism. Its function is as follows. Catalyzes the reduction of the glycolytic intermediate dihydroxyacetone phosphate (DHAP) to sn-glycerol 3-phosphate (G3P), the key precursor for phospholipid synthesis. The protein is Glycerol-3-phosphate dehydrogenase [NAD(P)+] of Neisseria meningitidis serogroup A / serotype 4A (strain DSM 15465 / Z2491).